A 358-amino-acid polypeptide reads, in one-letter code: 4-hydroxy-2-oxovalerate aldolase 2 (358 aa).

The Pyruvate carboxyltransferase domain occupies 16–268 (VLLHDMCLRD…ETGVDLFKLM (253 aa)). 24-25 (RD) is a substrate binding site. Residue D25 participates in Mn(2+) binding. Residue H28 is the Proton acceptor of the active site. Substrate-binding residues include S178 and H207. Mn(2+) is bound by residues H207 and H209. Y298 serves as a coordination point for substrate.

The protein belongs to the 4-hydroxy-2-oxovalerate aldolase family.

The enzyme catalyses (S)-4-hydroxy-2-oxopentanoate = acetaldehyde + pyruvate. The chain is 4-hydroxy-2-oxovalerate aldolase 2 from Methylibium petroleiphilum (strain ATCC BAA-1232 / LMG 22953 / PM1).